The sequence spans 10746 residues: Extracellular matrix-binding protein ebh (10746 aa).

Residues 1 to 39 (MNYRDKIQKFSIRKYTVGTFSTVIATLVFLGLNTSQAQA) form the signal peptide. Composition is skewed to polar residues over residues 41–59 (ETNQ…GDTQ) and 67–113 (VQNS…SQNE). 3 disordered regions span residues 41–174 (ETNQ…GNVQ), 246–274 (MPQR…PRSV), and 1340–1372 (IAGN…DGQR). Residues 120-130 (AAATPTQSAKA) show a composition bias toward low complexity. Basic and acidic residues predominate over residues 132–158 (SKHEQSESRAANKKENDNKATHVESHE). The span at 162–173 (VTASDSSDSGNV) shows a compositional bias: polar residues. Over residues 248 to 263 (QRQQTSRRSSRIQTRS) the composition is skewed to low complexity. Residues 1356–1372 (YKTTGYSQSNPTSDGQR) show a composition bias toward polar residues. 59 consecutive FIVAR domains span residues 2520 to 2576 (AKNH…VNAA), 2606 to 2662 (SKNN…ISDE), 2683 to 2746 (DTHE…VQTA), 2776 to 2832 (AKTK…IAAK), 2860 to 2915 (AKTQ…IRQN), 2943 to 2998 (AKNQ…INTN), 3026 to 3081 (AKTQ…INDK), 3150 to 3208 (AMTK…VNQK), 3276 to 3335 (AMTG…VNNA), 3403 to 3461 (AMGN…VNSA), 3529 to 3587 (AMGN…VTEA), 3655 to 3713 (AMNT…ITQK), 3781 to 3839 (AMAS…VEAA), 3907 to 3965 (AMGN…VEQA), 4033 to 4091 (AMGQ…VTAA), 4159 to 4217 (AMKG…ITQA), 4285 to 4343 (QMGN…VEAA), 4411 to 4469 (AMAN…VENA), 4537 to 4595 (AMGT…INQI), 4663 to 4721 (AMGQ…VDRA), 4789 to 4847 (AMNS…VDNA), 4915 to 4973 (AMGA…INGM), 5041 to 5099 (AMTV…VNSA), 5167 to 5225 (AMKG…ITQA), 5293 to 5351 (AMHS…VEQA), 5419 to 5477 (AMGQ…VERA), 5545 to 5603 (AMTA…VTNA), 5671 to 5729 (AMKG…INQA), 5797 to 5855 (AMTN…VESA), 5923 to 5981 (AMSN…VEQA), 6049 to 6107 (AMNQ…INQK), 6175 to 6232 (AMGN…VQAA), 6300 to 6358 (AMGQ…VEAA), 6426 to 6484 (AMQR…VEQA), 6552 to 6610 (AMDQ…VTAA), 6678 to 6736 (AMNQ…VTQA), 6804 to 6862 (AMER…VEAA), 6930 to 6988 (AMGN…VEAA), 7056 to 7114 (AMDK…INQA), 7182 to 7240 (AMGN…VEQA), 7308 to 7366 (AMTQ…ITAA), 7434 to 7492 (AMTQ…IQQA), 7560 to 7618 (AMTN…VEQA), 7686 to 7744 (AMTQ…VAQA), 7812 to 7870 (AMGT…VTQA), 7938 to 7996 (AMSN…ITRA), 8064 to 8125 (AMDQ…ITNE), 8190 to 8251 (AMDQ…ITNE), 8316 to 8374 (AMEL…VNRA), 8442 to 8500 (AMGN…VEQA), 8568 to 8625 (AMHG…INQA), 8693 to 8751 (LMDA…VTSA), 8819 to 8877 (AMKA…IDQA), 8945 to 9003 (AMEA…VEQL), 9071 to 9129 (AMQA…VEQL), 9197 to 9255 (AMET…VDQA), 9323 to 9377 (SMDQ…VDQA), 9445 to 9504 (VMDQ…VIKL), and 9699 to 9755 (AMET…INGA). A compositionally biased stretch (polar residues) spans 7066-7080 (DNATTKQNQNYTDSS). A disordered region spans residues 7066–7085 (DNATTKQNQNYTDSSPNKKD). A compositionally biased stretch (polar residues) spans 10492 to 10507 (DHSKPSSNSDGQSNSH). Residues 10492-10530 (DHSKPSSNSDGQSNSHLHVGYGTVNHPFNSSPIGHKKKL) form a disordered region. The helical transmembrane segment at 10552–10572 (IKNALGVVGISGLLASFWFFI) threads the bilayer. Residues 10649 to 10746 (RRKEDEEDVE…KKKKSKKNKK (98 aa)) form a disordered region. The segment covering 10664–10674 (TDEKVLQDNEH) has biased composition (basic and acidic residues). Residues 10719-10746 (KGKKSASKKPSKKVAAKKKKKKSKKNKK) are compositionally biased toward basic residues.

The protein localises to the cell membrane. The protein is Extracellular matrix-binding protein ebh (ebh) of Staphylococcus aureus (strain MRSA252).